A 28-amino-acid chain; its full sequence is fur leader peptide (28 aa).

In terms of biological role, cotranscribed with fur, it is essential for fur translation. The fur ribosomal binding site (RBS) is occluded by the 5'-mRNA secondary structure, which is opened by uof translation. This is fur leader peptide (uof) from Escherichia coli (strain K12).